A 273-amino-acid chain; its full sequence is Large ribosomal subunit protein uL2 (273 aa).

The segment at 221-263 (RGTAMNPVDHPHGGGEGRNFGKHPVTPWGVQTKGKKTRHNKRT) is disordered. A compositionally biased stretch (basic residues) spans 253-263 (KGKKTRHNKRT).

It belongs to the universal ribosomal protein uL2 family. As to quaternary structure, part of the 50S ribosomal subunit. Forms a bridge to the 30S subunit in the 70S ribosome.

In terms of biological role, one of the primary rRNA binding proteins. Required for association of the 30S and 50S subunits to form the 70S ribosome, for tRNA binding and peptide bond formation. It has been suggested to have peptidyltransferase activity; this is somewhat controversial. Makes several contacts with the 16S rRNA in the 70S ribosome. The polypeptide is Large ribosomal subunit protein uL2 (Histophilus somni (strain 129Pt) (Haemophilus somnus)).